The following is a 585-amino-acid chain: Protein DENND6B (585 aa).

The uDENN domain occupies 43–214; it reads ECVCVVTFDL…LPVMGVVVQV (172 aa). The cDENN domain maps to 246–373; sequence VHELDLFRCF…VKLKKPSRLK (128 aa). Residues 375–499 enclose the dDENN domain; sequence LDTKPGLYTA…KSPHFDGWYR (125 aa).

This sequence belongs to the DENND6 family.

Its subcellular location is the recycling endosome. The protein resides in the cytoplasm. Functionally, guanine nucleotide exchange factor (GEF) for RAB14. Also has some, lesser GEF activity towards RAB35. The chain is Protein DENND6B (DENND6B) from Homo sapiens (Human).